Reading from the N-terminus, the 218-residue chain is Thiopurine S-methyltransferase (218 aa).

4 residues coordinate S-adenosyl-L-methionine: tryptophan 10, leucine 45, glutamate 66, and arginine 123.

It belongs to the class I-like SAM-binding methyltransferase superfamily. TPMT family.

Its subcellular location is the cytoplasm. It catalyses the reaction S-adenosyl-L-methionine + a thiopurine = S-adenosyl-L-homocysteine + a thiopurine S-methylether.. In Shewanella denitrificans (strain OS217 / ATCC BAA-1090 / DSM 15013), this protein is Thiopurine S-methyltransferase.